Consider the following 124-residue polypeptide: Small ribosomal subunit protein uS12 (124 aa).

Aspartate 89 is modified (3-methylthioaspartic acid). A disordered region spans residues 105–124 (AGVKDRKKGRSKYGAKRPKA). Residues 109–124 (DRKKGRSKYGAKRPKA) are compositionally biased toward basic residues.

The protein belongs to the universal ribosomal protein uS12 family. As to quaternary structure, part of the 30S ribosomal subunit. Contacts proteins S8 and S17. May interact with IF1 in the 30S initiation complex.

Its function is as follows. With S4 and S5 plays an important role in translational accuracy. Interacts with and stabilizes bases of the 16S rRNA that are involved in tRNA selection in the A site and with the mRNA backbone. Located at the interface of the 30S and 50S subunits, it traverses the body of the 30S subunit contacting proteins on the other side and probably holding the rRNA structure together. The combined cluster of proteins S8, S12 and S17 appears to hold together the shoulder and platform of the 30S subunit. This Dichelobacter nodosus (strain VCS1703A) protein is Small ribosomal subunit protein uS12.